Consider the following 1563-residue polypeptide: DNA-directed RNA polymerase subunit beta' (1563 aa).

Zn(2+) contacts are provided by C61, C63, C76, and C79. D588, D590, and D592 together coordinate Mg(2+). The Zn(2+) site is built by C925, C999, C1006, and C1009.

This sequence belongs to the RNA polymerase beta' chain family. As to quaternary structure, the RNAP catalytic core consists of 2 alpha, 1 beta, 1 beta' and 1 omega subunit. When a sigma factor is associated with the core the holoenzyme is formed, which can initiate transcription. Requires Mg(2+) as cofactor. It depends on Zn(2+) as a cofactor.

It catalyses the reaction RNA(n) + a ribonucleoside 5'-triphosphate = RNA(n+1) + diphosphate. DNA-dependent RNA polymerase catalyzes the transcription of DNA into RNA using the four ribonucleoside triphosphates as substrates. The sequence is that of DNA-directed RNA polymerase subunit beta' from Hydrogenobaculum sp. (strain Y04AAS1).